The following is a 360-amino-acid chain: C-C chemokine receptor type 4 (360 aa).

Over 1-39 (MNATEVTDTTQDETVYNSYYFYESMPKPCTKEGIKAFGE) the chain is Extracellular. An N-linked (GlcNAc...) asparagine glycan is attached at Asn-2. The helical transmembrane segment at 40–67 (VFLPPLYSLVFLLGLFGNSVVVLVLFKY) threads the bilayer. Over 68–77 (KRLKSMTDVY) the chain is Cytoplasmic. Residues 78–98 (LLNLAISDLLFVLSLPFWGYY) form a helical membrane-spanning segment. Topologically, residues 99-111 (AADQWVFGLGLCK) are extracellular. A disulfide bond links Cys-110 and Cys-187. The chain crosses the membrane as a helical span at residues 112–133 (IVSWMYLVGFYSGIFFIMLMSI). The Cytoplasmic segment spans residues 134-150 (DRYLAIVHAVFSLKART). Residues 151 to 175 (LTYGVITSLITWSVAVFASLPGLLF) traverse the membrane as a helical segment. Over 176-206 (STCYTEHNHTYCKTQYSVNSTTWKVLSSLEI) the chain is Extracellular. N-linked (GlcNAc...) asparagine glycosylation is found at Asn-183 and Asn-194. Residues 207-226 (NVLGLLIPLGIMLFCYSMII) traverse the membrane as a helical segment. Topologically, residues 227–242 (RTLQHCKNEKKNRAVR) are cytoplasmic. Residues 243-267 (MIFAVVVLFLGFWTPYNVVLFLETL) form a helical membrane-spanning segment. The Extracellular portion of the chain corresponds to 268-284 (VELEVLQDCTLERYLDY). A helical transmembrane segment spans residues 285–308 (AIQATETLAFIHCCLNPVIYFFLG). The Cytoplasmic portion of the chain corresponds to 309 to 360 (EKFRKYITQLFRTCRGPLVLCKHCDFLQVYSADMSSSSYTQSTVDHDFRDAL).

Belongs to the G-protein coupled receptor 1 family. In natural killer cells, CCL22 binding induces phosphorylation on yet undefined Ser/Thr residues, most probably by beta-adrenergic receptor kinases 1 and 2. Expressed in the thymus, macrophages and T- and B-cells.

The protein resides in the cell membrane. High affinity receptor for the C-C type chemokines CCL17/TARC and CCL22/MDC. The activity of this receptor is mediated by G(i) proteins which activate a phosphatidylinositol-calcium second messenger system. Could play a role in lipopolysaccharide (LPS)-induced endotoxic shock. In the CNS, could mediate hippocampal-neuron survival. The sequence is that of C-C chemokine receptor type 4 (Ccr4) from Mus musculus (Mouse).